The primary structure comprises 161 residues: SsrA-binding protein (161 aa).

Belongs to the SmpB family.

It localises to the cytoplasm. Its function is as follows. Required for rescue of stalled ribosomes mediated by trans-translation. Binds to transfer-messenger RNA (tmRNA), required for stable association of tmRNA with ribosomes. tmRNA and SmpB together mimic tRNA shape, replacing the anticodon stem-loop with SmpB. tmRNA is encoded by the ssrA gene; the 2 termini fold to resemble tRNA(Ala) and it encodes a 'tag peptide', a short internal open reading frame. During trans-translation Ala-aminoacylated tmRNA acts like a tRNA, entering the A-site of stalled ribosomes, displacing the stalled mRNA. The ribosome then switches to translate the ORF on the tmRNA; the nascent peptide is terminated with the 'tag peptide' encoded by the tmRNA and targeted for degradation. The ribosome is freed to recommence translation, which seems to be the essential function of trans-translation. This is SsrA-binding protein from Vibrio parahaemolyticus serotype O3:K6 (strain RIMD 2210633).